Consider the following 489-residue polypeptide: MAVFAIQRLYIGGAYVDATSGETFDTLDPATGETLASVQQASAADVERAVQSAREGQREWAALTAMQRSRVLRRAVEILRERNDELAALETRDTGKPIAETLAVDIATGADVIEYYAGLATAIEGQQIPLRPTSFVYTRREPLGVCAGIGAWNYPIQIACWKSAPALAAGNAMIFKPSEITPLSALKLAEIYTEAGVPAGVFNVVQGDGRVGAMLAAHPDIEKISFTGGVETGKKVMSLAGASSLKEVTMELGGKSPLLVFDDADLERAADIAMSANFFSSGQVCTNGTRVFVQRGVLERFEALVLERVKRIRVGAPTNAATNFGPLASAAQLQKVLGYIESGKQEGARLMAGGKRLTEGHFGNGQYVEPTVFTGCHDDMRIVREEIFGPVMSILVFDDEDEAIARANRTAYGLAAGVVTGNLARAHRVIHRLEAGICWINTWGESPAEMPVGGYKQSGVGRENGLTTLEHYTRIKSVQVELGPYQPVF.

K(+) is bound by residues Thr-26 and Asp-93. 150 to 152 (GAW) provides a ligand contact to NAD(+). The active-site Charge relay system is Lys-162. 176–179 (KPSE) serves as a coordination point for NAD(+). Residue Ile-180 coordinates K(+). 229–232 (GVET) lines the NAD(+) pocket. Residue Leu-245 participates in K(+) binding. Glu-251 (proton acceptor) is an active-site residue. Residues Gly-253, Cys-285, and Glu-386 each coordinate NAD(+). The active-site Nucleophile is the Cys-285. Cys-285 is subject to Cysteine sulfenic acid (-SOH). Positions 456 and 459 each coordinate K(+). Residue Glu-463 is the Charge relay system of the active site.

The protein belongs to the aldehyde dehydrogenase family. As to quaternary structure, dimer of dimers. Requires K(+) as cofactor.

It catalyses the reaction betaine aldehyde + NAD(+) + H2O = glycine betaine + NADH + 2 H(+). The protein operates within amine and polyamine biosynthesis; betaine biosynthesis via choline pathway; betaine from betaine aldehyde: step 1/1. Functionally, involved in the biosynthesis of the osmoprotectant glycine betaine. Catalyzes the irreversible oxidation of betaine aldehyde to the corresponding acid. This Paraburkholderia xenovorans (strain LB400) protein is Betaine aldehyde dehydrogenase.